The chain runs to 455 residues: Bifunctional protein GlmU (455 aa).

The pyrophosphorylase stretch occupies residues 1–227 (MLTDIVILAA…ATEALGVNDP (227 aa)). Residues 8–11 (LAAG), Lys-22, Gln-73, 78–79 (GT), 100–102 (YGD), Gly-137, Glu-152, Asn-167, and Asn-225 contribute to the UDP-N-acetyl-alpha-D-glucosamine site. Residue Asp-102 coordinates Mg(2+). Position 225 (Asn-225) interacts with Mg(2+). Positions 228–248 (VQLAILERVFQRQQLRALQMQ) are linker. The interval 249–455 (GLRVADPARV…HWQRPRRDKK (207 aa)) is N-acetyltransferase. UDP-N-acetyl-alpha-D-glucosamine contacts are provided by Arg-331 and Lys-349. His-361 (proton acceptor) is an active-site residue. 2 residues coordinate UDP-N-acetyl-alpha-D-glucosamine: Tyr-364 and Asn-375. Residues Ala-378, 384-385 (NY), Ser-403, Ala-421, and Arg-438 each bind acetyl-CoA. The disordered stretch occupies residues 420-455 (GAGSTITKEVPPGGLTLSRSPQRTIPHWQRPRRDKK).

The protein in the N-terminal section; belongs to the N-acetylglucosamine-1-phosphate uridyltransferase family. It in the C-terminal section; belongs to the transferase hexapeptide repeat family. In terms of assembly, homotrimer. Mg(2+) is required as a cofactor.

Its subcellular location is the cytoplasm. The catalysed reaction is alpha-D-glucosamine 1-phosphate + acetyl-CoA = N-acetyl-alpha-D-glucosamine 1-phosphate + CoA + H(+). It carries out the reaction N-acetyl-alpha-D-glucosamine 1-phosphate + UTP + H(+) = UDP-N-acetyl-alpha-D-glucosamine + diphosphate. It functions in the pathway nucleotide-sugar biosynthesis; UDP-N-acetyl-alpha-D-glucosamine biosynthesis; N-acetyl-alpha-D-glucosamine 1-phosphate from alpha-D-glucosamine 6-phosphate (route II): step 2/2. It participates in nucleotide-sugar biosynthesis; UDP-N-acetyl-alpha-D-glucosamine biosynthesis; UDP-N-acetyl-alpha-D-glucosamine from N-acetyl-alpha-D-glucosamine 1-phosphate: step 1/1. Its pathway is bacterial outer membrane biogenesis; LPS lipid A biosynthesis. Catalyzes the last two sequential reactions in the de novo biosynthetic pathway for UDP-N-acetylglucosamine (UDP-GlcNAc). The C-terminal domain catalyzes the transfer of acetyl group from acetyl coenzyme A to glucosamine-1-phosphate (GlcN-1-P) to produce N-acetylglucosamine-1-phosphate (GlcNAc-1-P), which is converted into UDP-GlcNAc by the transfer of uridine 5-monophosphate (from uridine 5-triphosphate), a reaction catalyzed by the N-terminal domain. In Acidithiobacillus ferrooxidans (strain ATCC 23270 / DSM 14882 / CIP 104768 / NCIMB 8455) (Ferrobacillus ferrooxidans (strain ATCC 23270)), this protein is Bifunctional protein GlmU.